A 406-amino-acid chain; its full sequence is F-box/WD repeat-containing protein mec-15 (406 aa).

The F-box domain occupies 6–53 (PTELISLPSELLCHLFTYLPQRQLITEIPLVCRRFNTILNDDKFWSRR). 5 WD repeats span residues 101–142 (GHSA…NGED), 156–195 (AHSG…ALQN), 242–279 (LHKR…KPVL), 281–320 (EYSP…VLQT), and 365–406 (SHEL…DQEN).

May interact with the SCF ubiquitin ligase complex component skr-1. In terms of tissue distribution, expressed in several neurons in the head, tail and ventral cord, but absent in touch receptor neurons in adults. Expressed in GABAergic and cholinergic motor neurons.

It localises to the perikaryon. In terms of biological role, plays a role in mechanosensory transduction (touch sensitivity), touch receptor neuron development and synapse formation. Regulates expression of the protein snb-1 and the distribution of synaptic vesicles at synapses to promote synaptic transmission at the neuromuscular junctions of GABAergic motor neurons. This chain is F-box/WD repeat-containing protein mec-15, found in Caenorhabditis elegans.